The primary structure comprises 724 residues: MRFFVSCAKGLEYLLVDEVLALGAAGATATVAGVNVEGGLCDAQRLVLWSRLASRVLWPLAAFACADEDALYAGVAALPWVEHVLPGQTLAVDAHVSGEAITHARYAAQRVKDAVVDTLRDAGVVRPSVDVEHPDVRLNLSLRKGRATLSVDLGGRALHHRGWRQAPHAASLKEHLAAAVLLRAGWAKVYAEGGGLLDPMCGSGTLLIEGALMVADVAPGLSRYADPDAMSHVSVAERPVLLPSRWRGFDVVAWEALVVDAQQRARRGLAELRPVLHGSDIDPRALGAAFANARAAGVQDAIEFVVAGIDVLPAVSEPHGVVVCNAPYDVRLAADPGLYRHLGDALRRVVPRWRAALVCGSSTLAFATGLRADKKYQFFNGALECVLIVCDPVVPLAREAGGAQALSEGAQMAANRLRKNVQRLKKWRIRAGVECYRVYDADLPEYAAAIDVYQEVDGARRLFLHVQEYAAPASIPEGDVRRRRHELLAAVRAVFDVSVAQVALKTRQRGKGGSQYGCFAQRGEFFHVCEHGALLRVNLFDYLDTGLFLDHRPLRGRMAREAVGKRFLNVFCYTGVASVEAAVAGAAATTSVDLSSTYLHWCTDNFALNGQGGVRHRLVQADALAWLEAERGQYDVIFCDPPTFSNSARADDFDVQRDHVRLLRAAVARLTPGGVLYFSNNFRRFRLDVDAVAAFAQCEEISPVTIDLDFSRNTRIHRTWLLWR.

A THUMP domain is found at 42 to 153; the sequence is DAQRLVLWSR…KGRATLSVDL (112 aa).

It belongs to the methyltransferase superfamily. RlmKL family.

The protein localises to the cytoplasm. The enzyme catalyses guanosine(2445) in 23S rRNA + S-adenosyl-L-methionine = N(2)-methylguanosine(2445) in 23S rRNA + S-adenosyl-L-homocysteine + H(+). It carries out the reaction guanosine(2069) in 23S rRNA + S-adenosyl-L-methionine = N(2)-methylguanosine(2069) in 23S rRNA + S-adenosyl-L-homocysteine + H(+). Functionally, specifically methylates the guanine in position 2445 (m2G2445) and the guanine in position 2069 (m7G2069) of 23S rRNA. The protein is Ribosomal RNA large subunit methyltransferase K/L of Xylella fastidiosa (strain M23).